The following is a 436-amino-acid chain: 3-ketoacyl-CoA thiolase (436 aa).

Catalysis depends on Cys99, which acts as the Acyl-thioester intermediate. Catalysis depends on proton acceptor residues His392 and Cys422.

This sequence belongs to the thiolase-like superfamily. Thiolase family. As to quaternary structure, heterotetramer of two alpha chains (FadJ) and two beta chains (FadI).

The protein localises to the cytoplasm. The catalysed reaction is an acyl-CoA + acetyl-CoA = a 3-oxoacyl-CoA + CoA. It functions in the pathway lipid metabolism; fatty acid beta-oxidation. In terms of biological role, catalyzes the final step of fatty acid oxidation in which acetyl-CoA is released and the CoA ester of a fatty acid two carbons shorter is formed. This is 3-ketoacyl-CoA thiolase from Serratia proteamaculans (strain 568).